A 309-amino-acid chain; its full sequence is Porphobilinogen deaminase (309 aa).

Cys-242 bears the S-(dipyrrolylmethanemethyl)cysteine mark.

Belongs to the HMBS family. As to quaternary structure, monomer. Requires dipyrromethane as cofactor.

The enzyme catalyses 4 porphobilinogen + H2O = hydroxymethylbilane + 4 NH4(+). Its pathway is porphyrin-containing compound metabolism; protoporphyrin-IX biosynthesis; coproporphyrinogen-III from 5-aminolevulinate: step 2/4. Functionally, tetrapolymerization of the monopyrrole PBG into the hydroxymethylbilane pre-uroporphyrinogen in several discrete steps. The chain is Porphobilinogen deaminase from Legionella pneumophila (strain Paris).